The primary structure comprises 482 residues: MKFIVKPHPEVFVKSDSVRKRFIRILESNLRSIIQRETKGVEVINRRDHIEVTGLSDEYRDVTLAVLTQTPGIHHVLEVKQSGFKDMHDIFEQCLEMNREVIEGKTFCVRVKRRGNHDFTSIELERYVGGGLNQSVESASVRLKNPEVTVKFEVANDKLNLIIARHKGLGGFPLGTQEDVLSLISGGFDSGVSSYLHIKRGSKVHYLFFNLGGPAHEIGVKQVSHFLWKKYGSSAKVKFISVDFDPVVAEILEKVDDGQMGVILKRMFMRAGGMVAEKFGIEGLVTGEALGQVSSQTLTNLRHIDNVTDSLILRPLINWDKEDIIDLAREIGTEDFAKTMPEYCGVISKKPTVKAVKEKLEKEEAKFDFSVLEQAVYNARVMDIRDIEKESQEQAPEVEMVSELGSDVVVLDIRSAEEEDEKPLELDGVEVTHIPFFKLATKFGDLDQSKEYLLYCERGVMSRLQALLLIENGYKNVKVYRP.

A THUMP domain is found at 61 to 165 (DVTLAVLTQT…NDKLNLIIAR (105 aa)). ATP is bound by residues 183 to 184 (LI), K265, G287, and Q296. A disulfide bond links C344 and C456. One can recognise a Rhodanese domain in the interval 404-482 (LGSDVVVLDI…GYKNVKVYRP (79 aa)). Catalysis depends on C456, which acts as the Cysteine persulfide intermediate.

Belongs to the ThiI family.

The protein localises to the cytoplasm. The enzyme catalyses [ThiI sulfur-carrier protein]-S-sulfanyl-L-cysteine + a uridine in tRNA + 2 reduced [2Fe-2S]-[ferredoxin] + ATP + H(+) = [ThiI sulfur-carrier protein]-L-cysteine + a 4-thiouridine in tRNA + 2 oxidized [2Fe-2S]-[ferredoxin] + AMP + diphosphate. It carries out the reaction [ThiS sulfur-carrier protein]-C-terminal Gly-Gly-AMP + S-sulfanyl-L-cysteinyl-[cysteine desulfurase] + AH2 = [ThiS sulfur-carrier protein]-C-terminal-Gly-aminoethanethioate + L-cysteinyl-[cysteine desulfurase] + A + AMP + 2 H(+). It participates in cofactor biosynthesis; thiamine diphosphate biosynthesis. Catalyzes the ATP-dependent transfer of a sulfur to tRNA to produce 4-thiouridine in position 8 of tRNAs, which functions as a near-UV photosensor. Also catalyzes the transfer of sulfur to the sulfur carrier protein ThiS, forming ThiS-thiocarboxylate. This is a step in the synthesis of thiazole, in the thiamine biosynthesis pathway. The sulfur is donated as persulfide by IscS. The protein is tRNA sulfurtransferase of Aliivibrio fischeri (strain ATCC 700601 / ES114) (Vibrio fischeri).